The primary structure comprises 647 residues: Chaperone protein DnaK (647 aa).

At Thr-198 the chain carries Phosphothreonine; by autocatalysis. Basic and acidic residues-rich tracts occupy residues 514-529 (AEANKEEDKKKRESVD), 540-557 (STEKNLKEHGAKVSDADK), and 600-622 (SQEKKEGSPKEGDKNDEGKKDDN). Disordered regions lie at residues 514 to 557 (AEAN…DADK) and 596 to 647 (AIYK…EKSA). The segment covering 623-632 (VVDADFEEVK) has biased composition (acidic residues). Basic and acidic residues predominate over residues 633-647 (EESKEGKEEDKEKSA).

Belongs to the heat shock protein 70 family.

Functionally, acts as a chaperone. The sequence is that of Chaperone protein DnaK from Pelagibacter ubique (strain HTCC1062).